Here is a 220-residue protein sequence, read N- to C-terminus: Ribosomal RNA large subunit methyltransferase E (220 aa).

Residues G60, W62, D92, D108, and D133 each contribute to the S-adenosyl-L-methionine site. The Proton acceptor role is filled by K173.

It belongs to the class I-like SAM-binding methyltransferase superfamily. RNA methyltransferase RlmE family.

The protein localises to the cytoplasm. The catalysed reaction is uridine(2552) in 23S rRNA + S-adenosyl-L-methionine = 2'-O-methyluridine(2552) in 23S rRNA + S-adenosyl-L-homocysteine + H(+). Specifically methylates the uridine in position 2552 of 23S rRNA at the 2'-O position of the ribose in the fully assembled 50S ribosomal subunit. The sequence is that of Ribosomal RNA large subunit methyltransferase E from Paraburkholderia phymatum (strain DSM 17167 / CIP 108236 / LMG 21445 / STM815) (Burkholderia phymatum).